A 354-amino-acid polypeptide reads, in one-letter code: Serine/threonine-protein phosphatase 2A activator 2 (354 aa).

Belongs to the PTPA-type PPIase family.

The protein localises to the cytoplasm. The catalysed reaction is [protein]-peptidylproline (omega=180) = [protein]-peptidylproline (omega=0). In terms of biological role, PPIases accelerate the folding of proteins. It catalyzes the cis-trans isomerization of proline imidic peptide bonds in oligopeptides. Acts as a regulatory subunit for PP2A-like phosphatases modulating their activity or substrate specificity, probably by inducing a conformational change in the catalytic subunit, a direct target of the PPIase. Can reactivate inactive phosphatase PP2A-phosphatase methylesterase complexes (PP2Ai) in presence of ATP and Mg(2+) by dissociating the inactive form from the complex. This Yarrowia lipolytica (strain CLIB 122 / E 150) (Yeast) protein is Serine/threonine-protein phosphatase 2A activator 2 (RRD2).